The primary structure comprises 263 residues: Hydroxyethylthiazole kinase 1 (263 aa).

Residue M42 coordinates substrate. ATP is bound by residues K118 and T164. G191 provides a ligand contact to substrate.

The protein belongs to the Thz kinase family. Mg(2+) serves as cofactor.

It carries out the reaction 5-(2-hydroxyethyl)-4-methylthiazole + ATP = 4-methyl-5-(2-phosphooxyethyl)-thiazole + ADP + H(+). The protein operates within cofactor biosynthesis; thiamine diphosphate biosynthesis; 4-methyl-5-(2-phosphoethyl)-thiazole from 5-(2-hydroxyethyl)-4-methylthiazole: step 1/1. Functionally, catalyzes the phosphorylation of the hydroxyl group of 4-methyl-5-beta-hydroxyethylthiazole (THZ). The polypeptide is Hydroxyethylthiazole kinase 1 (Clostridium botulinum (strain Okra / Type B1)).